The chain runs to 244 residues: Nicotinamidase 1 (244 aa).

Belongs to the isochorismatase family. In terms of tissue distribution, expressed in roots and stems, and at lower levels in flowers, siliques and leaves.

The enzyme catalyses nicotinamide + H2O = nicotinate + NH4(+). The protein operates within cofactor biosynthesis; nicotinate biosynthesis; nicotinate from nicotinamide: step 1/1. Its function is as follows. Catalyzes the deamidation of nicotinamide, an early step in the NAD(+) salvage pathway. Prevents the accumulation of intracellular nicotinamide, a known inhibitor of poly(ADP-ribose) polymerases (PARP enzymes). In Arabidopsis thaliana (Mouse-ear cress), this protein is Nicotinamidase 1.